The primary structure comprises 205 residues: Imidazole glycerol phosphate synthase subunit HisH (205 aa).

In terms of domain architecture, Glutamine amidotransferase type-1 spans 6-205 (RVGIIDHGSG…LLTRWLNQLS (200 aa)). Cys-84 functions as the Nucleophile in the catalytic mechanism. Catalysis depends on residues His-185 and Glu-187.

In terms of assembly, heterodimer of HisH and HisF.

Its subcellular location is the cytoplasm. The enzyme catalyses 5-[(5-phospho-1-deoxy-D-ribulos-1-ylimino)methylamino]-1-(5-phospho-beta-D-ribosyl)imidazole-4-carboxamide + L-glutamine = D-erythro-1-(imidazol-4-yl)glycerol 3-phosphate + 5-amino-1-(5-phospho-beta-D-ribosyl)imidazole-4-carboxamide + L-glutamate + H(+). It carries out the reaction L-glutamine + H2O = L-glutamate + NH4(+). It participates in amino-acid biosynthesis; L-histidine biosynthesis; L-histidine from 5-phospho-alpha-D-ribose 1-diphosphate: step 5/9. Functionally, IGPS catalyzes the conversion of PRFAR and glutamine to IGP, AICAR and glutamate. The HisH subunit catalyzes the hydrolysis of glutamine to glutamate and ammonia as part of the synthesis of IGP and AICAR. The resulting ammonia molecule is channeled to the active site of HisF. The sequence is that of Imidazole glycerol phosphate synthase subunit HisH from Cutibacterium acnes (strain DSM 16379 / KPA171202) (Propionibacterium acnes).